Here is a 248-residue protein sequence, read N- to C-terminus: 14-3-3-like protein 2 (248 aa).

This sequence belongs to the 14-3-3 family. In terms of assembly, interacts with daf-16. Interacts with sir-2.1. Interacts with hcf-1.

Its subcellular location is the cytoplasm. It is found in the nucleus. Functionally, required for extension of lifespan by sir-2.1. Required to modulate lifespan, in concert with hcf-1, acting redundantly with 14-3-3-like protein par-5. Promotes nuclear export of yap-1. Negatively regulates the transcriptional activity of daf-16 by sequestering it to the cytoplasm. This is 14-3-3-like protein 2 from Caenorhabditis elegans.